The chain runs to 569 residues: Linoleate hydratase (569 aa).

Tyrosine 87 lines the FAD pocket. The active-site Proton donor is the tyrosine 205. Residues valine 254, serine 300, and threonine 524 each contribute to the FAD site.

The protein belongs to the oleate hydratase family. FAD serves as cofactor.

It localises to the cell membrane. The protein resides in the cytoplasm. It catalyses the reaction (9Z,12Z)-octadecadienoate + H2O = (10S)-hydroxy-(12Z)-octadecenoate. It carries out the reaction (10E,12Z)-octadecadienoate + H2O = (10S)-hydroxy-(12Z)-octadecenoate. The catalysed reaction is (9Z)-octadecenoate + H2O = 10-hydroxyoctadecanoate. The enzyme catalyses (10E)-octadecenoate + H2O = 10-hydroxyoctadecanoate. It catalyses the reaction (9E,11E)-octadecadienoate + H2O = 10-hydroxy-(11E)-octadecenoate. It carries out the reaction (9Z,11E)-octadecadienoate + H2O = 10-hydroxy-(11E)-octadecenoate. The catalysed reaction is (9Z)-hexadecenoate + H2O = 10-hydroxyhexadecanoate. The enzyme catalyses (9Z,12Z,15Z)-octadecatrienoate + H2O = (10S)-hydroxy-(12Z,15Z)-octadecadienoate. It catalyses the reaction (6Z,9Z,12Z)-octadecatrienoate + H2O = (10S)-hydroxy-(6Z,12Z)-octadecadienoate. It carries out the reaction (6Z,9Z,12Z,15Z)-octadecatetraenoate + H2O = (10S)-hydroxy-(6Z,12Z,15Z)-octadecatrienoate. It participates in lipid metabolism; fatty acid metabolism. Its activity is regulated as follows. The addition of NADH or NADPH highly increases catalytic activity, likely by reducing the cofactor FAD to FADH2. The hydration and dehydration reactions are strongly inhibited by Ag(+), Fe(2+), Cu(2+), Zn(2+), Hg(2+), and Fe(3+). Functionally, is involved in a saturation metabolic pathway of polyunsaturated fatty acids, that detoxifies unsaturated fatty acids and generates hydroxy fatty acids, oxo fatty acids, conjugated fatty acids such as conjugated linoleic acids (CLAs), and partially saturated trans-fatty acids as intermediates. CLA-HY catalyzes the hydration and dehydration steps in the production of 10-hydroxy-cis-12-octadecenoate, trans-10,cis-12-CLA, cis-9,trans-11-CLA, trans-9,trans-11-CLA, oleate and trans-10-octadecenoate during linoleate metabolism. Is also able to hydrate palmitoleic acid (cis-9-hexadecenoic acid), oleic acid, alpha-linolenic acid, gamma-linolenic acid, and stearidonic acid into the corresponding 10-hydroxy fatty acids, and dehydrate 10-hydroxy-cis-12,cis-15-octadecadienoic acid, 10-hydroxy-cis-6,cis-12-octadecadienoic acid, and 10-hydroxyoctadecanoic acid into the corresponding fatty acids with cis double bonds at the Delta9 position. As part of the gut microbiome, this enzyme modifies host fatty acid composition and is expected to improve human health by altering lipid metabolism related to the onset of metabolic syndrome. Shows regioselectivity for Delta9 double bond hydration, generating C10 hydroxy groups in the (S)-configuration with high enantioselectivity, when another double bond is in position 12. Is not able to hydrate fatty acids with a trans carbon-carbon double bond at Delta9 position (elaidic acid, trans-9-octadecenoic acid), fatty acid esters (methyl linoleate, monolinolein, dilinolein, and trilinolein), and conjugated fatty acids (conjugated linoleic acids), as well as fatty acids with other chain lengths, such as myristoleic acid (cis-9-tetradecenoic acid), arachidonic acid (cis-5,cis-8,cis-11,cis-14-eicosatetraenoic acid), EPA (cis-5,cis-8,cis-11,cis-14,cis-17-eicosapentaenoic acid), DHA (cis-4,cis-7,cis-10,cis-13,cis-16,cis-19-docosahexaenoic acid) and fatty acids with a cis carbon-carbon double bond at Delta11 position, such as cis-vaccenic acid and cis-11-octadecenoic acid, or fatty alcohols, such as linoleyl alcohol. Is not able to dehydrate 12-hydroxy, 3-hydroxy, and 9-hydroxy fatty acids. This is Linoleate hydratase from Lactiplantibacillus plantarum (Lactobacillus plantarum).